The chain runs to 98 residues: NADH-ubiquinone oxidoreductase chain 4L (98 aa).

Transmembrane regions (helical) follow at residues 2-22 (PSIF…TLVF), 29-49 (SLLC…LIIL), and 61-81 (ILLL…LVMV).

The protein belongs to the complex I subunit 4L family. As to quaternary structure, core subunit of respiratory chain NADH dehydrogenase (Complex I) which is composed of 45 different subunits.

It localises to the mitochondrion inner membrane. It carries out the reaction a ubiquinone + NADH + 5 H(+)(in) = a ubiquinol + NAD(+) + 4 H(+)(out). Its function is as follows. Core subunit of the mitochondrial membrane respiratory chain NADH dehydrogenase (Complex I) which catalyzes electron transfer from NADH through the respiratory chain, using ubiquinone as an electron acceptor. Part of the enzyme membrane arm which is embedded in the lipid bilayer and involved in proton translocation. This is NADH-ubiquinone oxidoreductase chain 4L (MT-ND4L) from Propithecus diadema diadema (Diademed sifaka).